We begin with the raw amino-acid sequence, 504 residues long: Probable cytosol aminopeptidase (504 aa).

Mn(2+) is bound by residues lysine 268 and aspartate 273. Residue lysine 280 is part of the active site. Positions 291, 350, and 352 each coordinate Mn(2+). Arginine 354 is an active-site residue.

This sequence belongs to the peptidase M17 family. Requires Mn(2+) as cofactor.

It localises to the cytoplasm. The catalysed reaction is Release of an N-terminal amino acid, Xaa-|-Yaa-, in which Xaa is preferably Leu, but may be other amino acids including Pro although not Arg or Lys, and Yaa may be Pro. Amino acid amides and methyl esters are also readily hydrolyzed, but rates on arylamides are exceedingly low.. The enzyme catalyses Release of an N-terminal amino acid, preferentially leucine, but not glutamic or aspartic acids.. Its function is as follows. Presumably involved in the processing and regular turnover of intracellular proteins. Catalyzes the removal of unsubstituted N-terminal amino acids from various peptides. The chain is Probable cytosol aminopeptidase from Psychromonas ingrahamii (strain DSM 17664 / CCUG 51855 / 37).